Here is a 2204-residue protein sequence, read N- to C-terminus: Non-reducing polyketide synthase CTB1 (2204 aa).

Residues 11–250 are N-terminal acylcarrier protein transacylase domain (SAT); it reads AFGDQTYDCS…TRLPITAPYH (240 aa). Positions 382–815 constitute a Ketosynthase family 3 (KS3) domain; it reads KSPIAILAAS…GGNTCLVLED (434 aa). Active-site for beta-ketoacyl synthase activity residues include C554, H689, and H734. Residues 923–1224 are malonyl-CoA:ACP transacylase (MAT) domain; the sequence is AFTGQGSAFE…QTFASINKDK (302 aa). The segment at 1299–1619 is product template (PT) domain; the sequence is SSSIHKVITN…VPKRLMHYIV (321 aa). Residues 1303 to 1439 are N-terminal hotdog fold; that stretch reads HKVITNTITA…CKIRFGSLEK (137 aa). The region spanning 1303 to 1616 is the PKS/mFAS DH domain; the sequence is HKVITNTITA…LQGVPKRLMH (314 aa). H1336 functions as the Proton acceptor; for dehydratase activity in the catalytic mechanism. The segment at 1468-1616 is C-terminal hotdog fold; the sequence is TYRFSKGMIY…LQGVPKRLMH (149 aa). Residue D1528 is the Proton donor; for dehydratase activity of the active site. The segment at 1625–1674 is disordered; that stretch reads KASGPPTEKKGSSPPVEKKASAPVAPTRPAIQRKNASIPPPATQVTPQNK. Residues 1631 to 1644 are compositionally biased toward basic and acidic residues; that stretch reads TEKKGSSPPVEKKA. Carrier domains follow at residues 1679-1756 and 1783-1865; these read PSVS…TRLS and DPSP…SGST. S1716 and S1824 each carry O-(pantetheine 4'-phosphoryl)serine. Over residues 1864-1875 the composition is skewed to polar residues; the sequence is STESFDSTTTKP. Residues 1864-1931 form a disordered region; sequence STESFDSTTT…PPKGRIPPAW (68 aa). Positions 1880–1895 are enriched in low complexity; the sequence is ATPPLTDSSASSPPSS. Residues 1945–2195 form a thioesterase (TE) domain region; sequence ILFLFPDGAG…SGAQMLVEHM (251 aa).

The cofactor is pantetheine 4'-phosphate.

The catalysed reaction is 6 malonyl-CoA + acetyl-CoA + 6 H(+) = nor-toralactone + 6 CO2 + 7 CoA + 2 H2O. It participates in mycotoxin biosynthesis. Polyketide synthase; part of the gene cluster that mediates the biosynthesis of cercosporin, a light-activated, non-host-selective toxin. The perylenequinone chromophore of cercosporin absorbs light energy to attain an electronically-activated triplet state and produces active oxygen species such as the hydroxyl radical, superoxide, hydrogen peroxide or singlet oxygen upon reaction with oxygen molecules. These reactive oxygen species cause damage to various cellular components including lipids, proteins and nucleic acids. The first step of cercosporin biosynthesis is performed by the polyketide synthase CTB1 which catalyzes the formation of nor-toralactone. The starter unit acyltransferase (SAT) domain of CTB1 initiates polyketide extension by the selective utilization of acetyl-CoA, which is elongated to the heptaketide in the beta-ketoacyl synthase (KS) domain by successive condensations with six malonyl units introduced by the malonyl acyltransferase (MAT) domain. The product template (PT) domain catalyzes C4-C9 and C2-C11 aldol cyclizations and dehydrations to a trihydroxynaphthalene, which is thought to be delivered to the thioesterase (TE) domain for product release. The bifunctional enzyme CTB3 then methylates nor-toralactone to toralactone before conducting an unusual oxidative aromatic ring opening. The O-methyltransferase CTB2 further methylates the nascent OH-6 of the CBT3 product, blocking further oxidation at this site before the reductase CTB6 reduces the 2-oxopropyl ketone at position C7, giving naphthalene. The FAD-dependent monooxygenase CTB5 in concert with the multicopper oxidase CTB12 are responsible for homodimerization of naphthalene with CTB7 installing the dioxepine moiety, finally producing cercosporin. The fasciclin domain-containing protein CTB11 might act with CTB5 and CTB12 whereas the roles of CTB9 and CTB10 have still to be elucidated. The polypeptide is Non-reducing polyketide synthase CTB1 (Cercospora beticola (Sugarbeet leaf spot fungus)).